The following is a 104-amino-acid chain: Small ribosomal subunit protein uS10 (104 aa).

It belongs to the universal ribosomal protein uS10 family. In terms of assembly, part of the 30S ribosomal subunit.

In terms of biological role, involved in the binding of tRNA to the ribosomes. This is Small ribosomal subunit protein uS10 from Alkaliphilus oremlandii (strain OhILAs) (Clostridium oremlandii (strain OhILAs)).